The following is a 494-amino-acid chain: Trigger factor (494 aa).

The 86-residue stretch at 169–254 (GDRITMDYVG…VKEVAAPADV (86 aa)) folds into the PPIase FKBP-type domain. The tract at residues 441 to 494 (LAEEEGEAKAETKKAAPKKKAAAKAEAADAGEGEEAAPKKKAAPKKKAADESAE) is disordered.

It belongs to the FKBP-type PPIase family. Tig subfamily.

It is found in the cytoplasm. It catalyses the reaction [protein]-peptidylproline (omega=180) = [protein]-peptidylproline (omega=0). Its function is as follows. Involved in protein export. Acts as a chaperone by maintaining the newly synthesized protein in an open conformation. Functions as a peptidyl-prolyl cis-trans isomerase. The polypeptide is Trigger factor (Rhizobium johnstonii (strain DSM 114642 / LMG 32736 / 3841) (Rhizobium leguminosarum bv. viciae)).